We begin with the raw amino-acid sequence, 415 residues long: Serine hydroxymethyltransferase (415 aa).

(6S)-5,6,7,8-tetrahydrofolate is bound by residues Leu-117 and 121-123 (GHL). Lys-226 bears the N6-(pyridoxal phosphate)lysine mark. (6S)-5,6,7,8-tetrahydrofolate-binding positions include Glu-241 and 349-351 (SPF).

Belongs to the SHMT family. In terms of assembly, homodimer. The cofactor is pyridoxal 5'-phosphate.

It localises to the cytoplasm. It carries out the reaction (6R)-5,10-methylene-5,6,7,8-tetrahydrofolate + glycine + H2O = (6S)-5,6,7,8-tetrahydrofolate + L-serine. It functions in the pathway one-carbon metabolism; tetrahydrofolate interconversion. The protein operates within amino-acid biosynthesis; glycine biosynthesis; glycine from L-serine: step 1/1. Its function is as follows. Catalyzes the reversible interconversion of serine and glycine with tetrahydrofolate (THF) serving as the one-carbon carrier. This reaction serves as the major source of one-carbon groups required for the biosynthesis of purines, thymidylate, methionine, and other important biomolecules. Also exhibits THF-independent aldolase activity toward beta-hydroxyamino acids, producing glycine and aldehydes, via a retro-aldol mechanism. This chain is Serine hydroxymethyltransferase, found in Geotalea daltonii (strain DSM 22248 / JCM 15807 / FRC-32) (Geobacter daltonii).